The sequence spans 218 residues: Small ribosomal subunit protein uS3c (218 aa).

The region spanning 47 to 118 (VQKNMRTSSG…KLNIAVTRIA (72 aa)) is the KH type-2 domain.

This sequence belongs to the universal ribosomal protein uS3 family. As to quaternary structure, part of the 30S ribosomal subunit.

Its subcellular location is the plastid. The protein localises to the chloroplast. The sequence is that of Small ribosomal subunit protein uS3c (rps3) from Nicotiana sylvestris (Wood tobacco).